The following is a 383-amino-acid chain: S-adenosylmethionine synthase (383 aa).

His15 is a binding site for ATP. Asp17 lines the Mg(2+) pocket. Residue Glu43 participates in K(+) binding. L-methionine contacts are provided by Glu56 and Gln99. Residues 99 to 109 (QSPDINQGVDR) are flexible loop. Residues 164–166 (DAK), 230–231 (RF), Asp239, 245–246 (RK), Ala262, and Lys266 contribute to the ATP site. Asp239 provides a ligand contact to L-methionine. Lys270 is a binding site for L-methionine.

This sequence belongs to the AdoMet synthase family. Homotetramer; dimer of dimers. The cofactor is Mg(2+). Requires K(+) as cofactor.

The protein localises to the cytoplasm. The enzyme catalyses L-methionine + ATP + H2O = S-adenosyl-L-methionine + phosphate + diphosphate. Its pathway is amino-acid biosynthesis; S-adenosyl-L-methionine biosynthesis; S-adenosyl-L-methionine from L-methionine: step 1/1. Functionally, catalyzes the formation of S-adenosylmethionine (AdoMet) from methionine and ATP. The overall synthetic reaction is composed of two sequential steps, AdoMet formation and the subsequent tripolyphosphate hydrolysis which occurs prior to release of AdoMet from the enzyme. This chain is S-adenosylmethionine synthase, found in Shewanella baltica (strain OS223).